The primary structure comprises 231 residues: Ferritin light chain (231 aa).

The N-terminal stretch at 1 to 19 (MKMLILAVSCLLAITGSLA) is a signal peptide. C23 and C43 are oxidised to a cystine. In terms of domain architecture, Ferritin-like diiron spans 50–208 (YGSHGNVATE…GHTSDLKKFI (159 aa)). The N-linked (GlcNAc...) asparagine glycan is linked to N134.

Belongs to the ferritin family. Oligomer of 12 light (L) chains and 12 heavy (H) chains; L and H chains are disulfide-linked. The functional molecule forms a roughly spherical shell with a diameter of 12 nm and contains a central cavity into which the insoluble ferric iron core is deposited.

The protein localises to the golgi apparatus. Its subcellular location is the secreted. Functionally, stores iron in a soluble, non-toxic, readily available form. Important for iron homeostasis. Iron is taken up in the ferrous form and deposited as ferric hydroxides after oxidation. Ferritin is composed of a heavy (H) chain which is responsible for the oxidation and uptake of ferrous iron, and a light (L) chain which facilitates the nucleation of the ferrihydrite iron core. The sequence is that of Ferritin light chain from Trichoplusia ni (Cabbage looper).